A 352-amino-acid chain; its full sequence is Guanine nucleotide-binding protein alpha-7 subunit (352 aa).

Gly2 is lipidated: N-myristoyl glycine. Cys4 is lipidated: S-palmitoyl cysteine. The 321-residue stretch at Arg32–Cys352 folds into the G-alpha domain. Residues Lys35–Thr48 are G1 motif. GTP is bound by residues Gly40–Ser47, Leu174–Thr180, Asp199–Gln203, Asn268–Asp271, and Ala324. Mg(2+)-binding residues include Ser47 and Thr180. Residues Asp172 to Thr180 are G2 motif. Residues Phe195 to Arg204 form a G3 motif region. Residues Ile264 to Asp271 form a G4 motif region. The segment at Thr322–Thr327 is G5 motif.

This sequence belongs to the G-alpha family. G(i/o/t/z) subfamily. In terms of assembly, g proteins are composed of 3 units; alpha, beta and gamma. The alpha chain contains the guanine nucleotide binding site.

Guanine nucleotide-binding proteins (G proteins) are involved as modulators or transducers in various transmembrane signaling systems. The sequence is that of Guanine nucleotide-binding protein alpha-7 subunit (gpa-7) from Caenorhabditis elegans.